We begin with the raw amino-acid sequence, 167 residues long: MELGLWLLLGLTVTSAAAALPAQPGNAGQERGPGRSGDQEEKRVPAHHRPRRCTCFTYKDKECVYYCHLDIIWINTPEQTVPYGLSNHRGSLRGKRSSGPVPESSQSSPQTRLRCACSGVDDKACAYFCAHVTSYSRRAEKAAAEEKQETGGPRQRLKSRTDKVHQP.

Positions 1–19 (MELGLWLLLGLTVTSAAAA) are cleaved as a signal peptide. Residues 20 to 50 (LPAQPGNAGQERGPGRSGDQEEKRVPAHHRP) constitute a propeptide that is removed on maturation. The segment at 22–45 (AQPGNAGQERGPGRSGDQEEKRVP) is disordered. 2 cysteine pairs are disulfide-bonded: Cys-53–Cys-67 and Cys-55–Cys-63. Positions 74-167 (INTPEQTVPY…KSRTDKVHQP (94 aa)) are excised as a propeptide. Positions 85–112 (LSNHRGSLRGKRSSGPVPESSQSSPQTR) are disordered. Over residues 97–109 (SSGPVPESSQSSP) the composition is skewed to low complexity. Positions 115–135 (CACSGVDDKACAYFCAHVTSY) are endothelin-like. Residues 140 to 149 (EKAAAEEKQE) are compositionally biased toward basic and acidic residues. Residues 140–167 (EKAAAEEKQETGGPRQRLKSRTDKVHQP) are disordered.

The protein belongs to the endothelin/sarafotoxin family.

Its subcellular location is the secreted. Functionally, endothelins are endothelium-derived vasoconstrictor peptides. This is Endothelin-3 (Edn3) from Rattus norvegicus (Rat).